The primary structure comprises 946 residues: Aminopeptidase N (946 aa).

Residues 1–15 (MRLLICLTLLGLVCG) form the signal peptide. N-linked (GlcNAc...) asparagine glycosylation is present at Asn-60. 308–312 (GAMEN) provides a ligand contact to substrate. Zn(2+) is bound at residue His-344. Residue Glu-345 is the Proton acceptor of the active site. His-348 and Glu-367 together coordinate Zn(2+). Asn-550 and Asn-605 each carry an N-linked (GlcNAc...) asparagine glycan. Cystine bridges form between Cys-715-Cys-722 and Cys-751-Cys-787.

This sequence belongs to the peptidase M1 family. Zn(2+) is required as a cofactor.

Its subcellular location is the cell membrane. It carries out the reaction Release of an N-terminal amino acid, Xaa-|-Yaa- from a peptide, amide or arylamide. Xaa is preferably Ala, but may be most amino acids including Pro (slow action). When a terminal hydrophobic residue is followed by a prolyl residue, the two may be released as an intact Xaa-Pro dipeptide.. In Plutella xylostella (Diamondback moth), this protein is Aminopeptidase N (APN1).